A 330-amino-acid polypeptide reads, in one-letter code: Aspartate--ammonia ligase (330 aa).

This sequence belongs to the class-II aminoacyl-tRNA synthetase family. AsnA subfamily.

It localises to the cytoplasm. It catalyses the reaction L-aspartate + NH4(+) + ATP = L-asparagine + AMP + diphosphate + H(+). Its pathway is amino-acid biosynthesis; L-asparagine biosynthesis; L-asparagine from L-aspartate (ammonia route): step 1/1. In Yersinia pseudotuberculosis serotype O:1b (strain IP 31758), this protein is Aspartate--ammonia ligase.